The following is a 205-amino-acid chain: Guanylate kinase (205 aa).

Positions 18–196 (PKLFIISAPA…AYQVLRSIFI (179 aa)) constitute a Guanylate kinase-like domain. 25 to 32 (APAGAGKT) is a binding site for ATP.

The protein belongs to the guanylate kinase family.

Its subcellular location is the cytoplasm. The catalysed reaction is GMP + ATP = GDP + ADP. Its function is as follows. Essential for recycling GMP and indirectly, cGMP. The polypeptide is Guanylate kinase (gmk) (Chlamydia trachomatis serovar D (strain ATCC VR-885 / DSM 19411 / UW-3/Cx)).